The following is a 357-amino-acid chain: Anthranilate phosphoribosyltransferase (357 aa).

5-phospho-alpha-D-ribose 1-diphosphate contacts are provided by residues Gly-91, 94–95, Thr-99, 101–104, 119–127, and Ser-131; these read GD, NIST, and KHGNRSVSS. An anthranilate-binding site is contributed by Gly-91. Ser-103 provides a ligand contact to Mg(2+). Asn-122 serves as a coordination point for anthranilate. Arg-177 is a binding site for anthranilate. Mg(2+) contacts are provided by Asp-235 and Glu-236.

This sequence belongs to the anthranilate phosphoribosyltransferase family. As to quaternary structure, homodimer. Requires Mg(2+) as cofactor.

It catalyses the reaction N-(5-phospho-beta-D-ribosyl)anthranilate + diphosphate = 5-phospho-alpha-D-ribose 1-diphosphate + anthranilate. The protein operates within amino-acid biosynthesis; L-tryptophan biosynthesis; L-tryptophan from chorismate: step 2/5. In terms of biological role, catalyzes the transfer of the phosphoribosyl group of 5-phosphorylribose-1-pyrophosphate (PRPP) to anthranilate to yield N-(5'-phosphoribosyl)-anthranilate (PRA). The polypeptide is Anthranilate phosphoribosyltransferase (Shewanella baltica (strain OS185)).